A 562-amino-acid chain; its full sequence is Dihydroxy-acid dehydratase 1 (562 aa).

Aspartate 80 is a binding site for Mg(2+). Cysteine 121 serves as a coordination point for [2Fe-2S] cluster. Residues aspartate 122 and lysine 123 each coordinate Mg(2+). At lysine 123 the chain carries N6-carboxylysine. Cysteine 194 serves as a coordination point for [2Fe-2S] cluster. Glutamate 446 contacts Mg(2+). Serine 472 functions as the Proton acceptor in the catalytic mechanism.

It belongs to the IlvD/Edd family. In terms of assembly, homodimer. The cofactor is [2Fe-2S] cluster. Mg(2+) serves as cofactor.

It carries out the reaction (2R)-2,3-dihydroxy-3-methylbutanoate = 3-methyl-2-oxobutanoate + H2O. It catalyses the reaction (2R,3R)-2,3-dihydroxy-3-methylpentanoate = (S)-3-methyl-2-oxopentanoate + H2O. It participates in amino-acid biosynthesis; L-isoleucine biosynthesis; L-isoleucine from 2-oxobutanoate: step 3/4. The protein operates within amino-acid biosynthesis; L-valine biosynthesis; L-valine from pyruvate: step 3/4. Functions in the biosynthesis of branched-chain amino acids. Catalyzes the dehydration of (2R,3R)-2,3-dihydroxy-3-methylpentanoate (2,3-dihydroxy-3-methylvalerate) into 2-oxo-3-methylpentanoate (2-oxo-3-methylvalerate) and of (2R)-2,3-dihydroxy-3-methylbutanoate (2,3-dihydroxyisovalerate) into 2-oxo-3-methylbutanoate (2-oxoisovalerate), the penultimate precursor to L-isoleucine and L-valine, respectively. This is Dihydroxy-acid dehydratase 1 from Staphylococcus saprophyticus subsp. saprophyticus (strain ATCC 15305 / DSM 20229 / NCIMB 8711 / NCTC 7292 / S-41).